Reading from the N-terminus, the 143-residue chain is Transcriptional regulator MraZ (143 aa).

SpoVT-AbrB domains lie at 5-47 (EYEH…TLEE) and 76-119 (AVEV…DRAS).

This sequence belongs to the MraZ family. Forms oligomers.

It is found in the cytoplasm. It localises to the nucleoid. The sequence is that of Transcriptional regulator MraZ from Staphylococcus carnosus (strain TM300).